We begin with the raw amino-acid sequence, 88 residues long: Probable oxaloacetate decarboxylase gamma chain (88 aa).

Residues 13-35 (LMFSGMGFVIIFLLILIWAIGIV) traverse the membrane as a helical segment.

It belongs to the OadG family. As to quaternary structure, heterotrimer of an alpha, a beta and a gamma subunit. The cofactor is Na(+).

It localises to the cell membrane. The enzyme catalyses oxaloacetate + 2 Na(+)(in) + H(+) = pyruvate + 2 Na(+)(out) + CO2. Functionally, catalyzes the decarboxylation of oxaloacetate coupled to Na(+) translocation. This chain is Probable oxaloacetate decarboxylase gamma chain, found in Mannheimia succiniciproducens (strain KCTC 0769BP / MBEL55E).